The sequence spans 244 residues: Ubiquinone/menaquinone biosynthesis C-methyltransferase UbiE (244 aa).

S-adenosyl-L-methionine is bound by residues Thr70, Asp91, and 117–118 (DA).

This sequence belongs to the class I-like SAM-binding methyltransferase superfamily. MenG/UbiE family.

The enzyme catalyses a 2-demethylmenaquinol + S-adenosyl-L-methionine = a menaquinol + S-adenosyl-L-homocysteine + H(+). The catalysed reaction is a 2-methoxy-6-(all-trans-polyprenyl)benzene-1,4-diol + S-adenosyl-L-methionine = a 5-methoxy-2-methyl-3-(all-trans-polyprenyl)benzene-1,4-diol + S-adenosyl-L-homocysteine + H(+). It participates in quinol/quinone metabolism; menaquinone biosynthesis; menaquinol from 1,4-dihydroxy-2-naphthoate: step 2/2. Its pathway is cofactor biosynthesis; ubiquinone biosynthesis. In terms of biological role, methyltransferase required for the conversion of demethylmenaquinol (DMKH2) to menaquinol (MKH2) and the conversion of 2-polyprenyl-6-methoxy-1,4-benzoquinol (DDMQH2) to 2-polyprenyl-3-methyl-6-methoxy-1,4-benzoquinol (DMQH2). The polypeptide is Ubiquinone/menaquinone biosynthesis C-methyltransferase UbiE (Chromobacterium violaceum (strain ATCC 12472 / DSM 30191 / JCM 1249 / CCUG 213 / NBRC 12614 / NCIMB 9131 / NCTC 9757 / MK)).